Here is an 87-residue protein sequence, read N- to C-terminus: Small ribosomal subunit protein uS17 (87 aa).

Belongs to the universal ribosomal protein uS17 family. Part of the 30S ribosomal subunit.

Its function is as follows. One of the primary rRNA binding proteins, it binds specifically to the 5'-end of 16S ribosomal RNA. This is Small ribosomal subunit protein uS17 from Geobacillus thermodenitrificans (strain NG80-2).